Consider the following 177-residue polypeptide: Large ribosomal subunit protein uL6 (177 aa).

Belongs to the universal ribosomal protein uL6 family. Part of the 50S ribosomal subunit.

This protein binds to the 23S rRNA, and is important in its secondary structure. It is located near the subunit interface in the base of the L7/L12 stalk, and near the tRNA binding site of the peptidyltransferase center. In Cellvibrio japonicus (strain Ueda107) (Pseudomonas fluorescens subsp. cellulosa), this protein is Large ribosomal subunit protein uL6.